Here is a 79-residue protein sequence, read N- to C-terminus: RNA-binding protein Hfq (79 aa).

Residues 10–69 (DPFLNALRKEHVPVSIYLVNGIKLQGNIESFDQYVVLLRNTVTQMVYKHAISTVVPARAV) enclose the Sm domain.

The protein belongs to the Hfq family. In terms of assembly, homohexamer.

RNA chaperone that binds small regulatory RNA (sRNAs) and mRNAs to facilitate mRNA translational regulation in response to envelope stress, environmental stress and changes in metabolite concentrations. Also binds with high specificity to tRNAs. The chain is RNA-binding protein Hfq from Cupriavidus metallidurans (strain ATCC 43123 / DSM 2839 / NBRC 102507 / CH34) (Ralstonia metallidurans).